A 74-amino-acid polypeptide reads, in one-letter code: Omwaprin-b (74 aa).

The N-terminal stretch at 1-24 is a signal peptide; sequence MSSGGLLLLLGLLTLWEVLTPVSS. One can recognise a WAP domain in the interval 27 to 71; sequence RPKKPGLCPPRPQKPCVKECKNDWSCPGQQKCCNYGCIDECRDPI. 4 cysteine pairs are disulfide-bonded: cysteine 34–cysteine 59, cysteine 42–cysteine 63, cysteine 46–cysteine 58, and cysteine 52–cysteine 67.

This sequence belongs to the venom waprin family. Expressed by the venom gland.

It is found in the secreted. Functionally, damages membranes of susceptible bacteria. Has antibacterial activity against the Gram-positive bacteria B.megaterium and S.warneri. After 45 minutes of treatment with this protein, B.megaterium have no visible pili and are smooth. Has no antibacterial activity against the Gram-positive bacteria B.thuringiensis, S.aureus, S.clavuligerus and B. anthracis, or the Gram-negative bacteria E.coli and A.tumefaciens. Has no hemolytic activity. Does not inhibit the proteinases elastase and cathepsin G. Is not toxic to mice. In Oxyuranus microlepidotus (Inland taipan), this protein is Omwaprin-b.